Here is a 236-residue protein sequence, read N- to C-terminus: Outer membrane protein P.III (236 aa).

Positions 1 to 22 are cleaved as a signal peptide; that stretch reads MTKQLKLSALFVALLASGTAVA. 4 consecutive repeat copies span residues 69 to 70, 71 to 72, 73 to 74, and 75 to 76. The 4 X 2 AA tandem repeats of X-P stretch occupies residues 69–76; that stretch reads VPEPEPAP. The region spanning 86-223 is the OmpA-like domain; that stretch reads YVDETISLSA…RVDVKIRSIV (138 aa). C185 and C208 form a disulfide bridge.

This sequence belongs to the outer membrane OOP (TC 1.B.6) superfamily.

It is found in the cell outer membrane. The protein is Outer membrane protein P.III of Neisseria gonorrhoeae.